Consider the following 100-residue polypeptide: Cell division topological specificity factor (100 aa).

The protein belongs to the MinE family.

In terms of biological role, prevents the cell division inhibition by proteins MinC and MinD at internal division sites while permitting inhibition at polar sites. This ensures cell division at the proper site by restricting the formation of a division septum at the midpoint of the long axis of the cell. This chain is Cell division topological specificity factor, found in Synechococcus sp. (strain JA-2-3B'a(2-13)) (Cyanobacteria bacterium Yellowstone B-Prime).